The chain runs to 171 residues: 3-hydroxydecanoyl-[acyl-carrier-protein] dehydratase (171 aa).

Residue His-70 is part of the active site.

This sequence belongs to the thioester dehydratase family. FabA subfamily. Homodimer.

The protein localises to the cytoplasm. It carries out the reaction a (3R)-hydroxyacyl-[ACP] = a (2E)-enoyl-[ACP] + H2O. The enzyme catalyses (3R)-hydroxydecanoyl-[ACP] = (2E)-decenoyl-[ACP] + H2O. It catalyses the reaction (2E)-decenoyl-[ACP] = (3Z)-decenoyl-[ACP]. The protein operates within lipid metabolism; fatty acid biosynthesis. Its function is as follows. Necessary for the introduction of cis unsaturation into fatty acids. Catalyzes the dehydration of (3R)-3-hydroxydecanoyl-ACP to E-(2)-decenoyl-ACP and then its isomerization to Z-(3)-decenoyl-ACP. Can catalyze the dehydratase reaction for beta-hydroxyacyl-ACPs with saturated chain lengths up to 16:0, being most active on intermediate chain length. The sequence is that of 3-hydroxydecanoyl-[acyl-carrier-protein] dehydratase from Pseudomonas fluorescens (strain SBW25).